A 349-amino-acid polypeptide reads, in one-letter code: Isopentenyl-diphosphate delta-isomerase (349 aa).

Substrate is bound at residue 6-7; the sequence is RK. Residues 62–64, serine 93, and asparagine 122 contribute to the FMN site; that span reads AMT. A substrate-binding site is contributed by glutamine 152. Glutamate 153 contributes to the Mg(2+) binding site. FMN contacts are provided by residues lysine 184, threonine 214, 258-259, and 280-281; these read GG and AG.

This sequence belongs to the IPP isomerase type 2 family. In terms of assembly, homooctamer. Dimer of tetramers. FMN is required as a cofactor. The cofactor is NADPH. Mg(2+) serves as cofactor.

It is found in the cytoplasm. It catalyses the reaction isopentenyl diphosphate = dimethylallyl diphosphate. Functionally, involved in the biosynthesis of isoprenoids. Catalyzes the 1,3-allylic rearrangement of the homoallylic substrate isopentenyl (IPP) to its allylic isomer, dimethylallyl diphosphate (DMAPP). The sequence is that of Isopentenyl-diphosphate delta-isomerase from Bacillus cytotoxicus (strain DSM 22905 / CIP 110041 / 391-98 / NVH 391-98).